We begin with the raw amino-acid sequence, 137 residues long: Protein ApaG (137 aa).

The ApaG domain occupies 2–126 (PKYQFQVQVQ…FVLEAFSPGQ (125 aa)).

This Acidovorax sp. (strain JS42) protein is Protein ApaG.